The sequence spans 490 residues: Phosphoethanolamine N-methyltransferase 3 (490 aa).

6 residues coordinate S-adenosyl-L-homocysteine: Gly60, Arg65, Asp81, Asp106, Val107, and Asn125. Phosphocholine-binding residues include Ser158, Ser163, Gly164, Arg168, and Tyr175. Residues 244–245 and Tyr253 contribute to the N-methylethanolamine phosphate site; that span reads QY. Tyr253 is a phosphocholine binding site. 7 residues coordinate S-adenosyl-L-homocysteine: Val262, Ser263, Gly289, Asp311, Asp337, Cys338, and Arg354. The phosphocholine site is built by Tyr385, Tyr399, Arg403, Tyr405, and Lys471. Residues Tyr385, Tyr399, 403–405, and Lys471 contribute to the N-methylethanolamine phosphate site; that span reads RGY.

The protein belongs to the class I-like SAM-binding methyltransferase superfamily. PEAMT family. In terms of tissue distribution, expressed in root vasculature, shoots, rosettes leaves, cauline leaves, sepals, petals, anther filaments and ovules. Highly expressed in leaf vasculature.

The protein resides in the cytoplasm. The catalysed reaction is phosphoethanolamine + S-adenosyl-L-methionine = N-methylethanolamine phosphate + S-adenosyl-L-homocysteine + H(+). The enzyme catalyses N-methylethanolamine phosphate + S-adenosyl-L-methionine = N,N-dimethylethanolamine phosphate + S-adenosyl-L-homocysteine + H(+). It catalyses the reaction N,N-dimethylethanolamine phosphate + S-adenosyl-L-methionine = phosphocholine + S-adenosyl-L-homocysteine + H(+). Its pathway is phospholipid metabolism; phosphatidylcholine biosynthesis; phosphocholine from phosphoethanolamine: step 1/1. In terms of biological role, involved in phosphocholine biosynthesis. Catalyzes the N-methylation of phosphoethanolamine, phosphomonomethylethanolamine and phosphodimethylethanolamine, the three methylation steps required to convert phosphoethanolamine to phosphocholine (PC). In association with NMT1, regulates PC homeostasis, phase transition at the shoot apex, coordinated organ development, and fertility. In associtation with NMT1, involved in phosphatidylcholine biosynthesis and vascular development. The chain is Phosphoethanolamine N-methyltransferase 3 from Arabidopsis thaliana (Mouse-ear cress).